We begin with the raw amino-acid sequence, 246 residues long: Triosephosphate isomerase (246 aa).

9–11 (NWK) serves as a coordination point for substrate. His95 functions as the Electrophile in the catalytic mechanism. Glu165 (proton acceptor) is an active-site residue. Substrate is bound by residues Gly171, Ser210, and 231–232 (GG).

This sequence belongs to the triosephosphate isomerase family. Homodimer.

It is found in the cytoplasm. It carries out the reaction D-glyceraldehyde 3-phosphate = dihydroxyacetone phosphate. It functions in the pathway carbohydrate biosynthesis; gluconeogenesis. Its pathway is carbohydrate degradation; glycolysis; D-glyceraldehyde 3-phosphate from glycerone phosphate: step 1/1. Its function is as follows. Involved in the gluconeogenesis. Catalyzes stereospecifically the conversion of dihydroxyacetone phosphate (DHAP) to D-glyceraldehyde-3-phosphate (G3P). In Thermodesulfovibrio yellowstonii (strain ATCC 51303 / DSM 11347 / YP87), this protein is Triosephosphate isomerase.